Here is a 231-residue protein sequence, read N- to C-terminus: Large ribosomal subunit protein uL1 (231 aa).

Belongs to the universal ribosomal protein uL1 family. In terms of assembly, part of the 50S ribosomal subunit.

In terms of biological role, binds directly to 23S rRNA. The L1 stalk is quite mobile in the ribosome, and is involved in E site tRNA release. Its function is as follows. Protein L1 is also a translational repressor protein, it controls the translation of the L11 operon by binding to its mRNA. The chain is Large ribosomal subunit protein uL1 from Pseudomonas fluorescens (strain ATCC BAA-477 / NRRL B-23932 / Pf-5).